A 296-amino-acid polypeptide reads, in one-letter code: HTH-type transcriptional regulator GltR (296 aa).

One can recognise an HTH lysR-type domain in the interval 1 to 58 (MNIQLLQVFLTTAREGSISKAALTLNYAQSNVTNKIQQLENDLQTKLFYRHSRGITLT). The H-T-H motif DNA-binding region spans 18–37 (ISKAALTLNYAQSNVTNKIQ).

Belongs to the LysR transcriptional regulatory family.

Its function is as follows. Positive regulator of glutamate biosynthesis (gltAB genes). Negatively regulates its own expression. The polypeptide is HTH-type transcriptional regulator GltR (gltR) (Bacillus subtilis (strain 168)).